Consider the following 35-residue polypeptide: Photosystem II reaction center protein T (35 aa).

A helical transmembrane segment spans residues 3 to 23; the sequence is ALVYTFLLVSTLGIIFFAIFF.

The protein belongs to the PsbT family. In terms of assembly, PSII is composed of 1 copy each of membrane proteins PsbA, PsbB, PsbC, PsbD, PsbE, PsbF, PsbH, PsbI, PsbJ, PsbK, PsbL, PsbM, PsbT, PsbY, PsbZ, Psb30/Ycf12, at least 3 peripheral proteins of the oxygen-evolving complex and a large number of cofactors. It forms dimeric complexes.

The protein resides in the plastid. It localises to the chloroplast thylakoid membrane. Found at the monomer-monomer interface of the photosystem II (PS II) dimer, plays a role in assembly and dimerization of PSII. PSII is a light-driven water plastoquinone oxidoreductase, using light energy to abstract electrons from H(2)O, generating a proton gradient subsequently used for ATP formation. In Gossypium barbadense (Sea Island cotton), this protein is Photosystem II reaction center protein T.